The chain runs to 80 residues: Conotoxin Lt6.2 (80 aa).

A signal peptide spans 1-24; that stretch reads MKLTRVLIIAVLFLTAYQLTTVET. Residues 25 to 47 constitute a propeptide that is removed on maturation; the sequence is YSRGKWMHRALRSTGKNPKVTRE. Intrachain disulfides connect Cys48–Cys62, Cys55–Cys66, and Cys61–Cys73.

This sequence belongs to the conotoxin O1 superfamily. Expressed by the venom duct.

Its subcellular location is the secreted. The polypeptide is Conotoxin Lt6.2 (Conus litteratus (Lettered cone)).